The primary structure comprises 208 residues: Imidazole glycerol phosphate synthase subunit HisH (208 aa).

Residues 1-206 (MIVIVDYDTG…KEMTEDEALS (206 aa)) form the Glutamine amidotransferase type-1 domain. Cysteine 79 functions as the Nucleophile in the catalytic mechanism. Active-site residues include histidine 181 and glutamate 183.

As to quaternary structure, heterodimer of HisH and HisF.

The protein resides in the cytoplasm. The enzyme catalyses 5-[(5-phospho-1-deoxy-D-ribulos-1-ylimino)methylamino]-1-(5-phospho-beta-D-ribosyl)imidazole-4-carboxamide + L-glutamine = D-erythro-1-(imidazol-4-yl)glycerol 3-phosphate + 5-amino-1-(5-phospho-beta-D-ribosyl)imidazole-4-carboxamide + L-glutamate + H(+). It carries out the reaction L-glutamine + H2O = L-glutamate + NH4(+). The protein operates within amino-acid biosynthesis; L-histidine biosynthesis; L-histidine from 5-phospho-alpha-D-ribose 1-diphosphate: step 5/9. IGPS catalyzes the conversion of PRFAR and glutamine to IGP, AICAR and glutamate. The HisH subunit catalyzes the hydrolysis of glutamine to glutamate and ammonia as part of the synthesis of IGP and AICAR. The resulting ammonia molecule is channeled to the active site of HisF. This Lacticaseibacillus casei (strain BL23) (Lactobacillus casei) protein is Imidazole glycerol phosphate synthase subunit HisH.